We begin with the raw amino-acid sequence, 204 residues long: Methylthioribulose-1-phosphate dehydratase (204 aa).

2 residues coordinate Zn(2+): His-94 and His-96.

This sequence belongs to the aldolase class II family. MtnB subfamily. Requires Zn(2+) as cofactor.

The enzyme catalyses 5-(methylsulfanyl)-D-ribulose 1-phosphate = 5-methylsulfanyl-2,3-dioxopentyl phosphate + H2O. It participates in amino-acid biosynthesis; L-methionine biosynthesis via salvage pathway; L-methionine from S-methyl-5-thio-alpha-D-ribose 1-phosphate: step 2/6. Catalyzes the dehydration of methylthioribulose-1-phosphate (MTRu-1-P) into 2,3-diketo-5-methylthiopentyl-1-phosphate (DK-MTP-1-P). The sequence is that of Methylthioribulose-1-phosphate dehydratase from Pseudomonas syringae pv. syringae (strain B728a).